The sequence spans 648 residues: Threonine--tRNA ligase (648 aa).

One can recognise a TGS domain in the interval 1–61 (MIKITLPDGS…TTDGNLILYT (61 aa)). Residues 240 to 539 (DHRKLGKELE…LLEHTAGNFP (300 aa)) form a catalytic region. Zn(2+) contacts are provided by cysteine 335, histidine 386, and histidine 516.

It belongs to the class-II aminoacyl-tRNA synthetase family. Homodimer. Zn(2+) serves as cofactor.

Its subcellular location is the cytoplasm. It carries out the reaction tRNA(Thr) + L-threonine + ATP = L-threonyl-tRNA(Thr) + AMP + diphosphate + H(+). Its function is as follows. Catalyzes the attachment of threonine to tRNA(Thr) in a two-step reaction: L-threonine is first activated by ATP to form Thr-AMP and then transferred to the acceptor end of tRNA(Thr). Also edits incorrectly charged L-seryl-tRNA(Thr). This is Threonine--tRNA ligase from Flavobacterium johnsoniae (strain ATCC 17061 / DSM 2064 / JCM 8514 / BCRC 14874 / CCUG 350202 / NBRC 14942 / NCIMB 11054 / UW101) (Cytophaga johnsonae).